Here is a 147-residue protein sequence, read N- to C-terminus: uncharacterized protein (147 aa).

Residues 3–23 (APMIGMVVLVVVLGLAVLALS) form a helical membrane-spanning segment.

The protein to M.leprae ML1147.

It localises to the membrane. This is an uncharacterized protein from Mycobacterium tuberculosis (strain CDC 1551 / Oshkosh).